The primary structure comprises 308 residues: tRNA dimethylallyltransferase (308 aa).

10–17 (GPTGVGKT) provides a ligand contact to ATP. A substrate-binding site is contributed by 12–17 (TGVGKT). Positions 35–38 (DSRQ) are interaction with substrate tRNA.

The protein belongs to the IPP transferase family. Monomer. Mg(2+) serves as cofactor.

It carries out the reaction adenosine(37) in tRNA + dimethylallyl diphosphate = N(6)-dimethylallyladenosine(37) in tRNA + diphosphate. Functionally, catalyzes the transfer of a dimethylallyl group onto the adenine at position 37 in tRNAs that read codons beginning with uridine, leading to the formation of N6-(dimethylallyl)adenosine (i(6)A). The chain is tRNA dimethylallyltransferase from Fervidobacterium nodosum (strain ATCC 35602 / DSM 5306 / Rt17-B1).